A 450-amino-acid polypeptide reads, in one-letter code: Asparagine--tRNA ligase (450 aa).

Belongs to the class-II aminoacyl-tRNA synthetase family. Homodimer.

It localises to the cytoplasm. The catalysed reaction is tRNA(Asn) + L-asparagine + ATP = L-asparaginyl-tRNA(Asn) + AMP + diphosphate + H(+). The chain is Asparagine--tRNA ligase from Metamycoplasma arthritidis (strain 158L3-1) (Mycoplasma arthritidis).